Here is a 391-residue protein sequence, read N- to C-terminus: Phosphoprotein (391 aa).

An N-terminus domain region spans residues 1–194; sequence MDQFIKQDET…GSLSGATLYA (194 aa). Residues T10, T16, T91, T150, and T165 each carry the phosphothreonine modification. Position 188 is a phosphoserine (S188). Residues 216–279 form a multimerization region; sequence ISANEIMDLL…MATVKIMDPG (64 aa). The stretch at 218-245 forms a coiled coil; the sequence is ANEIMDLLRGMDARLQHLEQKVDKVLAQ. Residue T250 is modified to Phosphothreonine. A Phosphoserine modification is found at S257. Phosphothreonine occurs at positions 258 and 282. Residues S292 and S294 each carry the phosphoserine modification. A Phosphothreonine modification is found at T298. A phosphoserine mark is found at S301 and S374. The segment at 343–391 is interaction with the nucleoprotein; that stretch reads AGQKVMITKMITDCVANPQMKQAFEQRLAKASTEDALNDIKRDIIRSAI. Phosphothreonine is present on T375.

Belongs to the rubulavirus/avulavirus P protein family. As to quaternary structure, homotetramer. Interacts (via multimerization domain) with polymerase L; this interaction forms the polymerase L-P complex. Interacts (via N-terminus) with N0 (via Ncore); this interaction allows P to chaperon N0 to avoid N polymerization before encapsidation. Interacts (via C-terminus) with N-RNA template; this interaction positions the polymerase on the template for both transcription and replication. Interacts with host RPS6KB1 kinase; this interaction may play a role in the viral replication and transcription.

It is found in the virion. Functionally, essential cofactor of the RNA polymerase L that plays a central role in the transcription and replication by forming the polymerase complex with RNA polymerase L and recruiting L to the genomic N-RNA template for RNA synthesis. Also plays a central role in the encapsidation of nascent RNA chains by forming the encapsidation complex with the nucleocapsid protein N (N-P complex). Acts as a chaperone for newly synthesized free N protein, so-called N0, allowing encapsidation of nascent RNA chains during replication. The nucleoprotein protein N prevents excessive phosphorylation of P, which leads to down-regulation of viral transcription/ replication. Participates, together with N, in the formation of viral factories (viroplasms), which are large inclusions in the host cytoplasm where replication takes place. This Homo sapiens (Human) protein is Phosphoprotein.